The sequence spans 124 residues: Holo-[acyl-carrier-protein] synthase (124 aa).

The Mg(2+) site is built by aspartate 8 and glutamate 56.

Belongs to the P-Pant transferase superfamily. AcpS family. Mg(2+) serves as cofactor.

It localises to the cytoplasm. It catalyses the reaction apo-[ACP] + CoA = holo-[ACP] + adenosine 3',5'-bisphosphate + H(+). Its function is as follows. Transfers the 4'-phosphopantetheine moiety from coenzyme A to a Ser of acyl-carrier-protein. This chain is Holo-[acyl-carrier-protein] synthase, found in Maridesulfovibrio salexigens (strain ATCC 14822 / DSM 2638 / NCIMB 8403 / VKM B-1763) (Desulfovibrio salexigens).